Reading from the N-terminus, the 109-residue chain is uncharacterized protein (109 aa).

A helical membrane pass occupies residues 26-48; sequence VTSIMTVSDINYLLLYLIILLTL.

Its subcellular location is the membrane. This is an uncharacterized protein from Saccharomyces cerevisiae (strain ATCC 204508 / S288c) (Baker's yeast).